Consider the following 150-residue polypeptide: UPF0178 protein Bcen2424_1660 (150 aa).

This sequence belongs to the UPF0178 family.

The chain is UPF0178 protein Bcen2424_1660 from Burkholderia cenocepacia (strain HI2424).